A 298-amino-acid chain; its full sequence is Tryptophan 2,3-dioxygenase (298 aa).

Substrate contacts are provided by residues 51-55, tyrosine 113, and arginine 117; that span reads FIIQH. Histidine 240 lines the heme pocket. Residue threonine 254 participates in substrate binding.

The protein belongs to the tryptophan 2,3-dioxygenase family. As to quaternary structure, homotetramer. It depends on heme as a cofactor.

The catalysed reaction is L-tryptophan + O2 = N-formyl-L-kynurenine. It participates in amino-acid degradation; L-tryptophan degradation via kynurenine pathway; L-kynurenine from L-tryptophan: step 1/2. In terms of biological role, heme-dependent dioxygenase that catalyzes the oxidative cleavage of the L-tryptophan (L-Trp) pyrrole ring and converts L-tryptophan to N-formyl-L-kynurenine. Catalyzes the oxidative cleavage of the indole moiety. This Xanthomonas euvesicatoria pv. vesicatoria (strain 85-10) (Xanthomonas campestris pv. vesicatoria) protein is Tryptophan 2,3-dioxygenase.